We begin with the raw amino-acid sequence, 442 residues long: Decapping and exoribonuclease protein 1 (442 aa).

Basic and acidic residues predominate over residues 31–40 (QSKLCKEKTT). Positions 31–56 (QSKLCKEKTTSDSSSSRKPSQQRDNY) are disordered. The span at 41–53 (SDSSSSRKPSQQR) shows a compositional bias: low complexity. Residue arginine 101 participates in substrate binding. Glutamate 255 is a binding site for a divalent metal cation. Substrate is bound at residue glutamate 293. The a divalent metal cation site is built by aspartate 295, glutamate 306, and leucine 307. 2 residues coordinate substrate: lysine 308 and glutamine 330.

It belongs to the DXO/Dom3Z family. Requires a divalent metal cation as cofactor.

The protein resides in the cytoplasm. The catalysed reaction is a 5'-end NAD(+)-phospho-ribonucleoside in mRNA + H2O = a 5'-end phospho-ribonucleoside in mRNA + NAD(+) + H(+). It catalyses the reaction a 5'-end (N(7)-methyl 5'-triphosphoguanosine)-ribonucleoside-ribonucleotide in mRNA + H2O = a (N(7)-methyl 5'-triphosphoguanosine)-nucleoside + a 5'-end phospho-ribonucleoside in mRNA + H(+). In terms of biological role, decapping enzyme for NAD-capped RNAs: specifically hydrolyzes the nicotinamide adenine dinucleotide (NAD) cap from a subset of RNAs by removing the entire NAD moiety from the 5'-end of an NAD-capped RNA. The NAD-cap is present at the 5'-end of some RNAs and snoRNAs. In contrast to the canonical 5'-end N7 methylguanosine (m7G) cap, the NAD cap promotes mRNA decay. Also acts as a non-canonical decapping enzyme that removes the entire cap structure of m7G capped or incompletely capped RNAs. Has decapping activity toward incomplete 5'-end m7G cap mRNAs such as unmethylated 5'-end-capped RNA (cap0), while it has no activity toward 2'-O-ribose methylated m7G cap (cap1). Also has 5'-3' exonuclease activity. The chain is Decapping and exoribonuclease protein 1 (DXO1) from Saccharomyces cerevisiae (strain ATCC 204508 / S288c) (Baker's yeast).